The chain runs to 85 residues: Photosystem I reaction center subunit PsaK (85 aa).

The next 2 helical transmembrane spans lie at 12–34 (TVTW…IAVG) and 54–76 (GGMG…IGAI).

Belongs to the PsaG/PsaK family.

The protein resides in the cellular thylakoid membrane. The sequence is that of Photosystem I reaction center subunit PsaK from Parasynechococcus marenigrum (strain WH8102).